The chain runs to 363 residues: Aminomethyltransferase (363 aa).

Belongs to the GcvT family. In terms of assembly, the glycine cleavage system is composed of four proteins: P, T, L and H.

The enzyme catalyses N(6)-[(R)-S(8)-aminomethyldihydrolipoyl]-L-lysyl-[protein] + (6S)-5,6,7,8-tetrahydrofolate = N(6)-[(R)-dihydrolipoyl]-L-lysyl-[protein] + (6R)-5,10-methylene-5,6,7,8-tetrahydrofolate + NH4(+). Its function is as follows. The glycine cleavage system catalyzes the degradation of glycine. This is Aminomethyltransferase from Nitrosomonas eutropha (strain DSM 101675 / C91 / Nm57).